The primary structure comprises 116 residues: Protein Rev (116 aa).

Phosphoserine; by host CK2 is present on Ser8. The segment at 18–26 (LIKSLYQSN) is homomultimerization. Disordered stretches follow at residues 20–46 (KSLYQSNPPPSPEGTRQARRNRRRRWR) and 84–116 (DSSEDCGTSGTQGVGSPQVLVESPAVLESGAKE). The Nuclear localization signal and RNA-binding (RRE) motif lies at 34 to 50 (TRQARRNRRRRWRERQR). Residues 36 to 46 (QARRNRRRRWR) show a composition bias toward basic residues. Positions 73–84 (LQLPPLERLTLD) match the Nuclear export signal and binding to XPO1 motif. The segment covering 88–98 (DCGTSGTQGVG) has biased composition (polar residues). Residues Ser92 and Ser99 each carry the phosphoserine; by host modification.

The protein belongs to the HIV-1 REV protein family. Homomultimer; when bound to the RRE. Multimeric assembly is essential for activity and may involve XPO1. Binds to human KPNB1, XPO1, TNPO1, RANBP5 and IPO7. Interacts with the viral Integrase. Interacts with human KHDRBS1. Interacts with human NAP1; this interaction decreases Rev multimerization and stimulates its activity. Interacts with human DEAD-box helicases DDX3 and DDX24; these interactions may serve for viral RNA export to the cytoplasm and packaging, respectively. Interacts with human PSIP1; this interaction may inhibit HIV-1 DNA integration by promoting dissociation of the Integrase-LEDGF/p75 complex. In terms of processing, asymmetrically arginine dimethylated at one site by host PRMT6. Methylation impairs the RNA-binding activity and export of viral RNA from the nucleus to the cytoplasm. Post-translationally, phosphorylated by protein kinase CK2. Presence of, and maybe binding to the N-terminus of the regulatory beta subunit of CK2 is necessary for CK2-mediated Rev's phosphorylation.

It is found in the host nucleus. It localises to the host nucleolus. Its subcellular location is the host cytoplasm. Functionally, escorts unspliced or incompletely spliced viral pre-mRNAs (late transcripts) out of the nucleus of infected cells. These pre-mRNAs carry a recognition sequence called Rev responsive element (RRE) located in the env gene, that is not present in fully spliced viral mRNAs (early transcripts). This function is essential since most viral proteins are translated from unspliced or partially spliced pre-mRNAs which cannot exit the nucleus by the pathway used by fully processed cellular mRNAs. Rev itself is translated from a fully spliced mRNA that readily exits the nucleus. Rev's nuclear localization signal (NLS) binds directly to KPNB1/Importin beta-1 without previous binding to KPNA1/Importin alpha-1. KPNB1 binds to the GDP bound form of RAN (Ran-GDP) and targets Rev to the nucleus. In the nucleus, the conversion from Ran-GDP to Ran-GTP dissociates Rev from KPNB1 and allows Rev's binding to the RRE in viral pre-mRNAs. Rev multimerization on the RRE via cooperative assembly exposes its nuclear export signal (NES) to the surface. Rev can then form a complex with XPO1/CRM1 and Ran-GTP, leading to nuclear export of the complex. Conversion from Ran-GTP to Ran-GDP mediates dissociation of the Rev/RRE/XPO1/RAN complex, so that Rev can return to the nucleus for a subsequent round of export. Beside KPNB1, also seems to interact with TNPO1/Transportin-1, RANBP5/IPO5 and IPO7/RANBP7 for nuclear import. The nucleoporin-like HRB/RIP is an essential cofactor that probably indirectly interacts with Rev to release HIV RNAs from the perinuclear region to the cytoplasm. The polypeptide is Protein Rev (Human immunodeficiency virus type 1 group M subtype B (isolate RF/HAT3) (HIV-1)).